A 399-amino-acid chain; its full sequence is Elongation factor Tu (399 aa).

Positions 10–209 (KPHVNIGTIG…EVDAYIPTPE (200 aa)) constitute a tr-type G domain. Residues 19–26 (GHVDHGKT) are G1. 19 to 26 (GHVDHGKT) contributes to the GTP binding site. Threonine 26 serves as a coordination point for Mg(2+). Residues 60–64 (GITIA) are G2. The interval 81–84 (DCPG) is G3. Residues 81 to 85 (DCPGH) and 136 to 139 (NKQD) each bind GTP. Positions 136-139 (NKQD) are G4. The tract at residues 174-176 (SAL) is G5.

Belongs to the TRAFAC class translation factor GTPase superfamily. Classic translation factor GTPase family. EF-Tu/EF-1A subfamily. Monomer.

The protein localises to the cytoplasm. The catalysed reaction is GTP + H2O = GDP + phosphate + H(+). GTP hydrolase that promotes the GTP-dependent binding of aminoacyl-tRNA to the A-site of ribosomes during protein biosynthesis. The protein is Elongation factor Tu of Helicobacter pylori (strain G27).